A 248-amino-acid polypeptide reads, in one-letter code: Transcription termination/antitermination protein NusG (248 aa).

The KOW domain occupies 197–227; that stretch reads KGDQVRVIEGPFMNFTGTVEEVHPEKRKLTV.

This sequence belongs to the NusG family. As to quaternary structure, monomer. Homodimer.

Its function is as follows. Participates in transcription elongation, termination and antitermination. The protein is Transcription termination/antitermination protein NusG of Aquifex aeolicus (strain VF5).